The chain runs to 363 residues: Alanine racemase (363 aa).

Lysine 34 acts as the Proton acceptor; specific for D-alanine in catalysis. Residue lysine 34 is modified to N6-(pyridoxal phosphate)lysine. Residue arginine 129 coordinates substrate. Catalysis depends on tyrosine 256, which acts as the Proton acceptor; specific for L-alanine. Methionine 304 is a substrate binding site.

The protein belongs to the alanine racemase family. Pyridoxal 5'-phosphate serves as cofactor.

The enzyme catalyses L-alanine = D-alanine. The protein operates within amino-acid biosynthesis; D-alanine biosynthesis; D-alanine from L-alanine: step 1/1. Functionally, catalyzes the interconversion of L-alanine and D-alanine. May also act on other amino acids. This chain is Alanine racemase (alr), found in Edwardsiella ictaluri (strain 93-146).